Here is a 465-residue protein sequence, read N- to C-terminus: 3-isopropylmalate dehydratase large subunit (465 aa).

The [4Fe-4S] cluster site is built by C347, C407, and C410.

This sequence belongs to the aconitase/IPM isomerase family. LeuC type 1 subfamily. In terms of assembly, heterodimer of LeuC and LeuD. Requires [4Fe-4S] cluster as cofactor.

The catalysed reaction is (2R,3S)-3-isopropylmalate = (2S)-2-isopropylmalate. The protein operates within amino-acid biosynthesis; L-leucine biosynthesis; L-leucine from 3-methyl-2-oxobutanoate: step 2/4. Its function is as follows. Catalyzes the isomerization between 2-isopropylmalate and 3-isopropylmalate, via the formation of 2-isopropylmaleate. This Aeromonas hydrophila subsp. hydrophila (strain ATCC 7966 / DSM 30187 / BCRC 13018 / CCUG 14551 / JCM 1027 / KCTC 2358 / NCIMB 9240 / NCTC 8049) protein is 3-isopropylmalate dehydratase large subunit.